Here is a 527-residue protein sequence, read N- to C-terminus: Bifunctional purine biosynthesis protein PurH (527 aa).

Residues 1–149 (MASDFLPVRR…KNFARVAVAT (149 aa)) form the MGS-like domain.

It belongs to the PurH family.

It carries out the reaction (6R)-10-formyltetrahydrofolate + 5-amino-1-(5-phospho-beta-D-ribosyl)imidazole-4-carboxamide = 5-formamido-1-(5-phospho-D-ribosyl)imidazole-4-carboxamide + (6S)-5,6,7,8-tetrahydrofolate. It catalyses the reaction IMP + H2O = 5-formamido-1-(5-phospho-D-ribosyl)imidazole-4-carboxamide. It functions in the pathway purine metabolism; IMP biosynthesis via de novo pathway; 5-formamido-1-(5-phospho-D-ribosyl)imidazole-4-carboxamide from 5-amino-1-(5-phospho-D-ribosyl)imidazole-4-carboxamide (10-formyl THF route): step 1/1. The protein operates within purine metabolism; IMP biosynthesis via de novo pathway; IMP from 5-formamido-1-(5-phospho-D-ribosyl)imidazole-4-carboxamide: step 1/1. The protein is Bifunctional purine biosynthesis protein PurH of Xanthomonas euvesicatoria pv. vesicatoria (strain 85-10) (Xanthomonas campestris pv. vesicatoria).